Reading from the N-terminus, the 93-residue chain is Probable endoribonuclease MazF1 (93 aa).

Belongs to the PemK/MazF family. Forms a complex with cognate antitoxin MazE1.

Functionally, toxic component of a type II toxin-antitoxin (TA) system, its cognate antitoxin is MazE1. Probably an endoribonuclease. The polypeptide is Probable endoribonuclease MazF1 (mazF1) (Mycobacterium tuberculosis (strain ATCC 25618 / H37Rv)).